The chain runs to 313 residues: Olfactory receptor 2B6 (313 aa).

The Extracellular segment spans residues Met1–Phe25. Asn5 carries N-linked (GlcNAc...) asparagine glycosylation. The helical transmembrane segment at Pro26 to Ser49 threads the bilayer. Residues Arg50–Thr57 are Cytoplasmic-facing. The helical transmembrane segment at Pro58–Pro79 threads the bilayer. The Extracellular segment spans residues Gln80 to Gln100. Cys97 and Cys189 are joined by a disulfide. The chain crosses the membrane as a helical span at residues Leu101 to Phe120. At Asp121–Arg139 the chain is on the cytoplasmic side. Residues Leu140–Trp158 traverse the membrane as a helical segment. Over Leu159 to Asn195 the chain is Extracellular. A helical membrane pass occupies residues Glu196–Ala219. The Cytoplasmic segment spans residues Phe220–Lys236. The helical transmembrane segment at Ala237–Tyr259 threads the bilayer. Over Leu260–Lys272 the chain is Extracellular. The chain crosses the membrane as a helical span at residues Met273–Leu292. At Arg293–Lys313 the chain is on the cytoplasmic side.

Belongs to the G-protein coupled receptor 1 family.

It localises to the cell membrane. In terms of biological role, odorant receptor. In Homo sapiens (Human), this protein is Olfactory receptor 2B6.